The sequence spans 5634 residues: Hemicentin-1 (5634 aa).

The N-terminal stretch at 1–21 (MIAQEVVHTVFLVALFRSSLA) is a signal peptide. Residues 41-216 (TLAFVFDVTG…EVLKWVEEAV (176 aa)) form the VWFA domain. Ig-like C2-type domains lie at 431–517 (PKVT…FDVS), 520–607 (PPII…VFLT), 612–697 (PKVT…STLR), 702–788 (PKLV…LTLD), 793–883 (PVFI…TTVT), 890–976 (PLIG…TSVA), 981–1067 (PSIQ…VQLT), 1072–1166 (PRVF…VKLS), 1171–1254 (PKIQ…AEVT), 1261–1353 (PSVE…YNLK), 1357–1446 (PPVI…FSVN), 1451–1540 (PSIL…IKLT), 1545–1633 (PSIK…FHVD), 1638–1723 (PTIE…REIK), 1732–1820 (PAVE…FEVT), 1825–1913 (PTIK…TQLH), 1918–2006 (PSLD…YSLQ), 2011–2096 (PSIS…RDID), 2103–2189 (PNIM…YNVN), 2194–2284 (PSIY…YNLQ), 2289–2378 (PSIT…YDLS), 2383–2472 (PSII…FGLS), 2477–2565 (PHIV…FRLN), 2570–2661 (PTIA…YEVK), 2665–2762 (PPII…VNIQ), 2765–2863 (PSFQ…YDVH), 2867–2958 (PPVI…FNLN), 2962–3050 (PPSV…VSLT), and 3055–3145 (PSIK…FHLN). Disulfide bonds link Cys451–Cys499 and Cys541–Cys591. O-linked (GalNAc...) threonine glycosylation is present at Thr615. Cystine bridges form between Cys633/Cys681, Cys723/Cys772, Cys814/Cys867, Cys911/Cys960, Cys1002/Cys1051, Cys1101/Cys1150, Cys1192/Cys1240, Cys1287/Cys1337, Cys1381/Cys1430, Cys1474/Cys1524, and Cys1568/Cys1617. Residues Thr1292 and Thr1386 are each glycosylated (O-linked (GalNAc...) threonine). An O-linked (GalNAc...) threonine glycan is attached at Thr1639. 2 disulfide bridges follow: Cys1662–Cys1711 and Cys1755–Cys1804. Thr1826 carries an O-linked (GalNAc...) threonine glycan. 14 disulfides stabilise this stretch: Cys1847-Cys1897, Cys1941-Cys1990, Cys2032-Cys2082, Cys2124-Cys2173, Cys2217-Cys2268, Cys2313-Cys2362, Cys2407-Cys2456, Cys2500-Cys2549, Cys2596-Cys2645, Cys2695-Cys2744, Cys2798-Cys2847, Cys2893-Cys2942, Cys2985-Cys3034, and Cys3080-Cys3129. O-linked (GalNAc...) threonine glycosylation occurs at Thr3151. 15 consecutive Ig-like C2-type domains span residues 3155–3227 (PETE…VASN), 3244–3334 (PSVA…FNLN), 3339–3428 (PKIR…YSLQ), 3433–3515 (PNMD…GEVS), 3526–3614 (PHIN…YLVR), 3619–3707 (PNIA…FNLT), 3712–3798 (PSIG…IDLQ), 3803–3891 (PSIA…VDLT), 3896–3982 (PTIA…VTLR), 3987–4073 (PVIQ…VKLN), 4077–4163 (PPVI…STLT), 4168–4252 (PRIQ…RIVT), 4259–4332 (PTFT…AENS), 4347–4434 (PPVF…MSLT), and 4439–4526 (PIIT…VIVQ). Disulfide bonds link Cys3172/Cys3223, Cys3267/Cys3318, Cys3363/Cys3412, Cys3456/Cys3505, Cys3549/Cys3598, Cys3642/Cys3691, Cys3733/Cys3782, and Cys3824/Cys3875. An O-linked (GalNAc...) threonine glycan is attached at Thr3897. Intrachain disulfides connect Cys3917-Cys3966, Cys4008-Cys4057, Cys4099-Cys4147, Cys4189-Cys4238, Cys4280-Cys4327, Cys4370-Cys4418, Cys4460-Cys4508, Cys4540-Cys4577, Cys4544-Cys4582, Cys4555-Cys4567, Cys4597-Cys4634, Cys4601-Cys4639, Cys4612-Cys4624, Cys4654-Cys4691, Cys4658-Cys4696, Cys4669-Cys4681, Cys4711-Cys4748, Cys4715-Cys4753, Cys4726-Cys4738, Cys4768-Cys4805, Cys4772-Cys4810, Cys4783-Cys4795, Cys4825-Cys4862, Cys4829-Cys4867, and Cys4840-Cys4852. A glycan (O-linked (GalNAc...) threonine) is linked at Thr4379. TSP type-1 domains follow at residues 4528–4583 (HGGF…KLCP), 4585–4640 (DGHW…RPCP), 4642–4697 (HGVW…RHCP), 4699–4754 (DGRW…DPCP), 4756–4811 (HGNW…DMCP), and 4813–4868 (DGSW…QACP). One can recognise a Nidogen G2 beta-barrel domain in the interval 4870-5092 (GPQRARGSVI…SKGDRSNQCP (223 aa)). Residues 5106–5145 (DEDECTAGNPCSHTCHNAIGAYYCSCPKGLTIAADGRTCQ) form the EGF-like 1; calcium-binding domain. 3 cysteine pairs are disulfide-bonded: Cys5110–Cys5120, Cys5116–Cys5129, and Cys5131–Cys5144. Residues 5146 to 5189 (DIDECALGGHTCRAGQDCDNTIGSYRCVVHCGTGFRRTSDGLSC) form the EGF-like 2; calcium-binding domain. The 38-residue stretch at 5191–5228 (DINECQESSPCHQRCFNVIGSFHCGCEAGYQLKGRKCI) folds into the EGF-like 3; calcium-binding domain. 3 disulfide bridges follow: Cys5195/Cys5205, Cys5201/Cys5214, and Cys5216/Cys5227. An EGF-like 4; calcium-binding domain is found at 5229-5269 (DVNECRQNVCRPDQHCKNTRGGYKCIDLCPSGMTKAENGTC). The 36-residue stretch at 5271 to 5306 (DIDECKDGTHQCRYNQICENTRGSYRCACPRGYRSQ) folds into the EGF-like 5; calcium-binding domain. Cystine bridges form between Cys5275/Cys5288, Cys5282/Cys5297, Cys5318/Cys5329, Cys5325/Cys5338, Cys5340/Cys5353, Cys5435/Cys5445, Cys5441/Cys5454, and Cys5456/Cys5469. The EGF-like 6; calcium-binding domain maps to 5314–5354 (DINECEQVPKPCAHQCSNSPGSFKCICLPGQQLLGDGKSCA). Residues 5431 to 5470 (DIDECQNRDTCQHECKNTIGSYQCVCPPGYRLMLNGKTCQ) form the EGF-like 7; calcium-binding domain.

As to expression, in the kidney, expressed in the glomerulus (at protein level). Expressed in whisker and hair follicles, eye, tongue, and splenic and lymph node conduits (at protein level). In the embryo, localizes to the cleavage furrow at the two-cell stage (at protein level). In neonatal skin, expressed throughout the dermis (at protein level). In adult skin, strongly concentrated at the dermal side of the basement membrane but not detectable in the deeper dermis. Shows tendon-specific localization at the myotendinous junction and is also detected in the perichondrium (at protein level). Expressed by chondrocytes residing in articular cartilage and the femoral growth plate of 52 week old mice (at protein level). Expressed in vascular endothelial cells in coronary arteries and sparsely in endocardial endothelium (at protein level). Expressed in skin, tongue, lung and eye. At 14.5 dpc, expressed in the vibrissae, dermis, forelimb, kidney, intestine, lung and iliac cartilage where expression is found mainly in mesenchymal cells.

The protein localises to the secreted. The protein resides in the extracellular space. It localises to the extracellular matrix. Its subcellular location is the basement membrane. It is found in the cytoplasm. The protein localises to the cell junction. The protein resides in the cleavage furrow. In terms of biological role, involved in transforming growth factor beta-mediated rearrangement of the podocyte cytoskeleton which includes reduction of F-actin fibers and broadening, flattening and elongation of podocytes. Plays a role in basement membrane organization. May promote cleavage furrow maturation during cytokinesis in preimplantation embryos. May play a role in the architecture of adhesive and flexible epithelial cell junctions. May play a role during myocardial remodeling by imparting an effect on cardiac fibroblast migration. In Mus musculus (Mouse), this protein is Hemicentin-1.